The sequence spans 215 residues: Pyridoxine/pyridoxamine 5'-phosphate oxidase (215 aa).

Substrate-binding positions include 9-12 (RRDY) and Lys-69. FMN-binding positions include 64-69 (RVLLLK), 79-80 (FT), Lys-86, and Gln-108. Substrate contacts are provided by Tyr-126, Arg-130, and Ser-134. FMN-binding positions include 143–144 (QS) and Trp-188. 194–196 (RLH) lines the substrate pocket. Arg-198 serves as a coordination point for FMN.

It belongs to the pyridoxamine 5'-phosphate oxidase family. Homodimer. FMN serves as cofactor.

It catalyses the reaction pyridoxamine 5'-phosphate + O2 + H2O = pyridoxal 5'-phosphate + H2O2 + NH4(+). The catalysed reaction is pyridoxine 5'-phosphate + O2 = pyridoxal 5'-phosphate + H2O2. It participates in cofactor metabolism; pyridoxal 5'-phosphate salvage; pyridoxal 5'-phosphate from pyridoxamine 5'-phosphate: step 1/1. The protein operates within cofactor metabolism; pyridoxal 5'-phosphate salvage; pyridoxal 5'-phosphate from pyridoxine 5'-phosphate: step 1/1. Catalyzes the oxidation of either pyridoxine 5'-phosphate (PNP) or pyridoxamine 5'-phosphate (PMP) into pyridoxal 5'-phosphate (PLP). In Pseudomonas putida (strain GB-1), this protein is Pyridoxine/pyridoxamine 5'-phosphate oxidase.